Here is a 164-residue protein sequence, read N- to C-terminus: MARGINKVILVGNLGNDPDIKYTQGGMTITTISLATTSVRKDKDGNTQERTEWHRVKFFGKLGEIAGEYLRKGSQCYIEGSIRYDKFTGQDGQERYVTEIVADEMQMLGGRSDGGGMGGGGERPQRQTSQRQDYAPRRQTRQPSQSPQSSPPPMDDFADDDIPF.

Positions 5–109 (INKVILVGNL…IVADEMQMLG (105 aa)) constitute an SSB domain. A disordered region spans residues 108-164 (LGGRSDGGGMGGGGERPQRQTSQRQDYAPRRQTRQPSQSPQSSPPPMDDFADDDIPF). The segment covering 111 to 122 (RSDGGGMGGGGE) has biased composition (gly residues). The Important for interaction with partner proteins signature appears at 159 to 164 (DDDIPF).

Homotetramer.

In terms of biological role, plays an important role in DNA replication, recombination and repair. Binds to ssDNA and to an array of partner proteins to recruit them to their sites of action during DNA metabolism. The chain is Single-stranded DNA-binding protein (ssb) from Xylella fastidiosa (strain Temecula1 / ATCC 700964).